Here is a 146-residue protein sequence, read N- to C-terminus: Hemoglobin subunit beta-1 (146 aa).

Residues 2–146 (GLTAHDRQLI…IADALGKGYH (145 aa)) enclose the Globin domain. Residues His63 and His92 each contribute to the heme b site.

This sequence belongs to the globin family. Heterotetramer of two alpha chains and two beta chains. Red blood cells.

Involved in oxygen transport from the lung to the various peripheral tissues. The polypeptide is Hemoglobin subunit beta-1 (hbb1) (Xenopus laevis (African clawed frog)).